The sequence spans 310 residues: p-hydroxybenzoic acid efflux pump subunit AaeA (310 aa).

Residues 12–32 (AITVVLVILAFIAIFNAWVYY) form a helical membrane-spanning segment.

It belongs to the membrane fusion protein (MFP) (TC 8.A.1) family.

The protein localises to the cell inner membrane. Its function is as follows. Forms an efflux pump with AaeB. This chain is p-hydroxybenzoic acid efflux pump subunit AaeA, found in Escherichia coli O139:H28 (strain E24377A / ETEC).